The primary structure comprises 130 residues: Encapsulin nanocompartment cargo protein EncC (130 aa).

3 residues coordinate Fe cation: glutamate 31, glutamate 61, and histidine 64. The Di-iron-binding motif signature appears at 61–64 (EREH). The disordered stretch occupies residues 103-130 (EAVGKEGAAPSPADVTPEKRLTVGSLRR). Positions 123 to 130 (LTVGSLRR) are probable targeting peptide.

Belongs to the ferritin-like superfamily.

The protein localises to the encapsulin nanocompartment. Its function is as follows. Cargo protein of a type 1 encapsulin nanocompartment. May help nucleate Fe atoms in the interior of the encapsulin nanocompartment. Present in about 92 copies/encapsulin nanocompartment. This is Encapsulin nanocompartment cargo protein EncC from Myxococcus xanthus (strain DK1622).